A 409-amino-acid chain; its full sequence is AT-rich interactive domain-containing protein 3C (409 aa).

The span at 1–14 (MEALQRQQAARLAQ) shows a compositional bias: low complexity. Residues 1-91 (MEALQRQQAA…SPSSQSPGIQ (91 aa)) form a disordered region. Residues 19–30 (LAPPRLPLPQPP) are compositionally biased toward pro residues. Residues 49–70 (AEEEEGAEDEEGETPLAEEETA) are compositionally biased toward acidic residues. The 93-residue stretch at 110–202 (DPKRKEFLDD…YLYPYECETR (93 aa)) folds into the ARID domain. 3 disordered regions span residues 233 to 274 (NLAG…PAHA), 306 to 333 (TREKLAPEEPPEKRAVLMGPVDSPRLGA), and 385 to 409 (PVPASLGPTNPPPLPSTGPPSSTLP). The span at 235–257 (AGPTPRGAPGPASSHGPAPTATP) shows a compositional bias: low complexity. One can recognise an REKLES domain in the interval 301–386 (LASEATREKL…GILFARRQPV (86 aa)). Basic and acidic residues predominate over residues 306 to 320 (TREKLAPEEPPEKRA). Residues 393–402 (TNPPPLPSTG) are compositionally biased toward pro residues.

Interacts (via REKLES DOMAIN) with NPM1; the interaction mediates ARID3C nuclear shuttling.

It localises to the nucleus. Functionally, transcription factor involved in monocyte-to-macrophage differentiation. Forms a complex with NPM1 to translocate to the nucleus, acting as a transcription factor that promotes the expression of the genes involved in macrophage differentiation, such as STAT3, STAT1 and JUNB. This Mus musculus (Mouse) protein is AT-rich interactive domain-containing protein 3C (Arid3c).